The following is a 262-amino-acid chain: Phosphate import ATP-binding protein PstB (262 aa).

The 242-residue stretch at 16–257 (IDVRNLNFYY…PHRKETEDYI (242 aa)) folds into the ABC transporter domain. 48–55 (GPSGCGKS) contacts ATP.

Belongs to the ABC transporter superfamily. Phosphate importer (TC 3.A.1.7) family. The complex is composed of two ATP-binding proteins (PstB), two transmembrane proteins (PstC and PstA) and a solute-binding protein (PstS).

The protein resides in the cell inner membrane. It catalyses the reaction phosphate(out) + ATP + H2O = ADP + 2 phosphate(in) + H(+). In terms of biological role, part of the ABC transporter complex PstSACB involved in phosphate import. Responsible for energy coupling to the transport system. This is Phosphate import ATP-binding protein PstB from Cupriavidus pinatubonensis (strain JMP 134 / LMG 1197) (Cupriavidus necator (strain JMP 134)).